Reading from the N-terminus, the 340-residue chain is DNA-directed RNA polymerase subunit alpha (340 aa).

The alpha N-terminal domain (alpha-NTD) stretch occupies residues 1–236 (MLSLSKNWNT…EQLQLFIAFE (236 aa)). An alpha C-terminal domain (alpha-CTD) region spans residues 251–340 (FSPYLLKRVD…LSKRYEDSYN (90 aa)).

The protein belongs to the RNA polymerase alpha chain family. Homodimer. The RNAP catalytic core consists of 2 alpha, 1 beta, 1 beta' and 1 omega subunit. When a sigma factor is associated with the core the holoenzyme is formed, which can initiate transcription.

It carries out the reaction RNA(n) + a ribonucleoside 5'-triphosphate = RNA(n+1) + diphosphate. In terms of biological role, DNA-dependent RNA polymerase catalyzes the transcription of DNA into RNA using the four ribonucleoside triphosphates as substrates. This is DNA-directed RNA polymerase subunit alpha from Rickettsia typhi (strain ATCC VR-144 / Wilmington).